Here is a 577-residue protein sequence, read N- to C-terminus: NKAP family protein UM04995 (577 aa).

The tract at residues 1–479 (MPTLAERLGS…YGGALLPGEG (479 aa)) is disordered. The segment covering 20 to 31 (KSSHDREQELRS) has biased composition (basic and acidic residues). Over residues 36–49 (SKQTSRNTAHQDLA) the composition is skewed to polar residues. Residues 50–60 (SSERRSIDREL) are compositionally biased toward basic and acidic residues. The span at 70 to 89 (SPLSSPQNGSSPRRQRGSPS) shows a compositional bias: low complexity. Composition is skewed to basic and acidic residues over residues 127–163 (PRED…DSRR), 170–193 (SGDR…REAP), and 265–297 (DSSS…DKHH). 2 stretches are compositionally biased toward basic residues: residues 298–316 (SSSR…RRSS) and 325–336 (SRHRHTRSSRSH). Residues 340–350 (DDDDDDDEDVD) show a composition bias toward acidic residues. Positions 363-385 (KVSDGSDSGRSESETDSDSDARS) are enriched in basic and acidic residues. Basic residues predominate over residues 386–395 (SRHRRRHHKS). Basic and acidic residues-rich tracts occupy residues 396–408 (DRSS…ESEK) and 417–439 (SESE…RRDS). Positions 529 to 570 (RKENQVISAEEKRTMLRLQAEEKAKKEREIVSQFKELVDTLQ) form a coiled coil.

Belongs to the NKAP family.

The chain is NKAP family protein UM04995 from Mycosarcoma maydis (Corn smut fungus).